The sequence spans 191 residues: Large ribosomal subunit protein bL9 (191 aa).

It belongs to the bacterial ribosomal protein bL9 family.

In terms of biological role, binds to the 23S rRNA. The chain is Large ribosomal subunit protein bL9 from Granulibacter bethesdensis (strain ATCC BAA-1260 / CGDNIH1).